We begin with the raw amino-acid sequence, 384 residues long: Oxoeicosanoid receptor 1 (384 aa).

A disordered region spans residues 1-21 (MELHNLSSPSPSLSSSVLPPS). The Extracellular portion of the chain corresponds to 1-58 (MELHNLSSPSPSLSSSVLPPSFSPSPSSAPSAFTTVGGSSGGPCHPTSSSLVSAFLAP). N-linked (GlcNAc...) asparagine glycosylation occurs at asparagine 5. Residues 7–21 (SSPSPSLSSSVLPPS) are compositionally biased toward low complexity. Residues 59 to 79 (ILALEFVLGLVGNSLALFIFC) traverse the membrane as a helical segment. The Cytoplasmic segment spans residues 80-87 (IHTRPWTS). A helical membrane pass occupies residues 88–108 (NTVFLVSLVAADFLLISNLPL). Over 109 to 129 (RVDYYLLHETWRFGAAACKVN) the chain is Extracellular. A disulfide bridge connects residues cysteine 126 and cysteine 198. The chain crosses the membrane as a helical span at residues 130–152 (LFMLSTNRTASVVFLTAIALNRY). Residues 153–172 (LKVVQPHHVLSRASVGAAAR) are Cytoplasmic-facing. A helical membrane pass occupies residues 173 to 193 (VAGGLWVGILLLNGHLLLSTF). The Extracellular segment spans residues 194–215 (SGPSCLSYRVGTKPSASLRWHQ). A helical membrane pass occupies residues 216–236 (ALYLLEFFLPLALILFAIVSI). Over 237 to 256 (GLTIRNRGLGGQAGPQRAMR) the chain is Cytoplasmic. Residues 257 to 277 (VLAMVVAVYTICFLPSIIFGM) traverse the membrane as a helical segment. The Extracellular segment spans residues 278–297 (ASMVAFWLSACRSLDLCTQL). Residues 298-318 (FHGSLAFTYLNSVLDPVLYCF) traverse the membrane as a helical segment. The Cytoplasmic segment spans residues 319–384 (SSPNFLHQSR…SLEKEGSSQG (66 aa)).

This sequence belongs to the G-protein coupled receptor 1 family. Expressed in various tissues except brain. Expression is more intense in liver, kidney, peripheral leukocyte, lung, and spleen than in other tissues. Highly expressed in eosinophils, neutrophils, and lung macrophages.

The protein resides in the membrane. Its function is as follows. Receptor for eicosanoids and polyunsaturated fatty acids such as 5-oxo-6E,8Z,11Z,14Z-eicosatetraenoic acid (5-OXO-ETE), 5(S)-hydroperoxy-6E,8Z,11Z,14Z-eicosatetraenoic acid (5(S)-HPETE) and arachidonic acid. Seems to be coupled to the G(i)/G(o), families of heteromeric G proteins. This Homo sapiens (Human) protein is Oxoeicosanoid receptor 1 (OXER1).